Consider the following 442-residue polypeptide: 4-hydroxyphenylpyruvate dioxygenase (442 aa).

2 consecutive VOC domains span residues Arg45–Ala200 and Arg216–Lys376. Positions 219, 301, and 387 each coordinate Fe cation.

This sequence belongs to the 4HPPD family. Requires Fe cation as cofactor.

The protein resides in the cytoplasm. The enzyme catalyses 3-(4-hydroxyphenyl)pyruvate + O2 = homogentisate + CO2. It functions in the pathway amino-acid degradation; L-phenylalanine degradation; acetoacetate and fumarate from L-phenylalanine: step 3/6. Its pathway is cofactor biosynthesis; prenylquinone biosynthesis. The protein is 4-hydroxyphenylpyruvate dioxygenase of Daucus carota (Wild carrot).